Consider the following 274-residue polypeptide: Long chain fatty acid elongase 2 (274 aa).

Helical transmembrane passes span 29–49 (MSTFVPLSYKIMIGYLVTIYF), 73–93 (FSLFSGIAAYKLIPELFGVFM), 115–135 (FWGWAFVMSKAPELGDTMFLV), 140–160 (PVIFMHWYHHALTFVYAVVTY), 170–190 (SLALNLAVHTVMYFYFAVRAL), 201–221 (FITTIQIVQFVISCYIFGHLV), and 238–258 (VLSIGGLMYISYLFLFAKFFY).

Belongs to the ELO family. Expressed in various tissues and parts of the body, including the ventral cord, pharyngeal muscles, uterus, and the tail, and most strongly in intestinal cells.

The protein localises to the membrane. It catalyses the reaction hexadecanoyl-CoA + malonyl-CoA + H(+) = 3-oxooctadecanoyl-CoA + CO2 + CoA. The protein operates within lipid metabolism; fatty acid biosynthesis. Its function is as follows. Catalyzes the first and rate-limiting reaction of the four reactions that constitute the long-chain fatty acids elongation cycle. Uses malonyl-CoA to add 2 carbons per cycle to the chain of long-chain fatty acids. Condensing enzyme responsible for the elongation of palmitate (hexadecanoate, 16:0), also involved in polyunsaturated fatty acid (PUFA) biosynthesis. This Caenorhabditis elegans protein is Long chain fatty acid elongase 2.